The following is a 257-amino-acid chain: Deoxyribose-phosphate aldolase (257 aa).

The active-site Proton donor/acceptor is D102. Catalysis depends on K166, which acts as the Schiff-base intermediate with acetaldehyde. The active-site Proton donor/acceptor is K198.

The protein belongs to the DeoC/FbaB aldolase family. DeoC type 2 subfamily.

It is found in the cytoplasm. The enzyme catalyses 2-deoxy-D-ribose 5-phosphate = D-glyceraldehyde 3-phosphate + acetaldehyde. Its pathway is carbohydrate degradation; 2-deoxy-D-ribose 1-phosphate degradation; D-glyceraldehyde 3-phosphate and acetaldehyde from 2-deoxy-alpha-D-ribose 1-phosphate: step 2/2. Its function is as follows. Catalyzes a reversible aldol reaction between acetaldehyde and D-glyceraldehyde 3-phosphate to generate 2-deoxy-D-ribose 5-phosphate. The polypeptide is Deoxyribose-phosphate aldolase (Shewanella amazonensis (strain ATCC BAA-1098 / SB2B)).